The sequence spans 84 residues: Anaphase-promoting complex subunit 11 (84 aa).

Residues Cys-23, Cys-26, Cys-34, Cys-37, Cys-44, Cys-51, His-53, His-56, His-58, Cys-59, Cys-73, and Cys-76 each coordinate Zn(2+). Residues 34–77 form an RING-type zinc finger; that stretch reads CPDCKVPGDDCPLVWGQCSHCFHMHCILKWLNAQQVQQHCPMCR.

Belongs to the RING-box family. In terms of assembly, the mammalian APC/C is composed at least of 14 distinct subunits ANAPC1, ANAPC2, CDC27/APC3, ANAPC4, ANAPC5, CDC16/APC6, ANAPC7, CDC23/APC8, ANAPC10, ANAPC11, CDC26/APC12, ANAPC13, ANAPC15 and ANAPC16 that assemble into a complex of at least 19 chains with a combined molecular mass of around 1.2 MDa; APC/C interacts with FZR1 and FBXO5. Interacts with the cullin domain of ANAPC2. Interacts with UBE2D2. Auto-ubiquitinated.

The protein resides in the cytoplasm. Its subcellular location is the nucleus. It participates in protein modification; protein ubiquitination. In terms of biological role, together with the cullin protein ANAPC2, constitutes the catalytic component of the anaphase promoting complex/cyclosome (APC/C), a cell cycle-regulated E3 ubiquitin ligase that controls progression through mitosis and the G1 phase of the cell cycle. The APC/C complex acts by mediating ubiquitination and subsequent degradation of target proteins: it mainly mediates the formation of 'Lys-11'-linked polyubiquitin chains and, to a lower extent, the formation of 'Lys-48'- and 'Lys-63'-linked polyubiquitin chains. The APC/C complex catalyzes assembly of branched 'Lys-11'-/'Lys-48'-linked branched ubiquitin chains on target proteins. May recruit the E2 ubiquitin-conjugating enzymes to the complex. This chain is Anaphase-promoting complex subunit 11 (Anapc11), found in Mus musculus (Mouse).